Here is a 211-residue protein sequence, read N- to C-terminus: Prolactin-3C1 (211 aa).

An N-terminal signal peptide occupies residues 1–29 (MQLSLTQARTWKGLLLLVSCMILWISVTP). N77 and N173 each carry an N-linked (GlcNAc...) asparagine glycan. A disulfide bridge connects residues C80 and C187.

This sequence belongs to the somatotropin/prolactin family. As to expression, expressed exclusively in decidual tissue.

The protein localises to the secreted. The chain is Prolactin-3C1 (Prl3c1) from Rattus norvegicus (Rat).